A 473-amino-acid chain; its full sequence is Photosystem II CP43 reaction center protein (473 aa).

A propeptide spanning residues 1-14 (MKTLYSRRRFYHVE) is cleaved from the precursor. Threonine 15 carries the post-translational modification N-acetylthreonine. Threonine 15 carries the post-translational modification Phosphothreonine. 5 consecutive transmembrane segments (helical) span residues 69–93 (LFEVAHFVPEKPMYEQGLILLPHLA), 134–155 (LLGPETLEESFPFFGYVWKDRN), 178–200 (KALYFGGVYDTWAPGGGDVRKIT), 255–275 (KPFAWARRALVWSGEAYLSYS), and 291–312 (WFNNTAYPSEFYGPTGPEASQA). Residue glutamate 367 participates in [CaMn4O5] cluster binding. The chain crosses the membrane as a helical span at residues 447-471 (RARAAAAGFEKGIDRDFEPVLSMTP).

Belongs to the PsbB/PsbC family. PsbC subfamily. As to quaternary structure, PSII is composed of 1 copy each of membrane proteins PsbA, PsbB, PsbC, PsbD, PsbE, PsbF, PsbH, PsbI, PsbJ, PsbK, PsbL, PsbM, PsbT, PsbX, PsbY, PsbZ, Psb30/Ycf12, at least 3 peripheral proteins of the oxygen-evolving complex and a large number of cofactors. It forms dimeric complexes. The cofactor is Binds multiple chlorophylls and provides some of the ligands for the Ca-4Mn-5O cluster of the oxygen-evolving complex. It may also provide a ligand for a Cl- that is required for oxygen evolution. PSII binds additional chlorophylls, carotenoids and specific lipids..

It is found in the plastid. It localises to the chloroplast thylakoid membrane. One of the components of the core complex of photosystem II (PSII). It binds chlorophyll and helps catalyze the primary light-induced photochemical processes of PSII. PSII is a light-driven water:plastoquinone oxidoreductase, using light energy to abstract electrons from H(2)O, generating O(2) and a proton gradient subsequently used for ATP formation. The polypeptide is Photosystem II CP43 reaction center protein (Solanum bulbocastanum (Wild potato)).